A 144-amino-acid polypeptide reads, in one-letter code: 3-dehydroquinate dehydratase (144 aa).

The Proton acceptor role is filled by Y24. Substrate-binding residues include N73, H79, and D86. The Proton donor role is filled by H99. Substrate is bound by residues 100–101 (LS) and R110.

It belongs to the type-II 3-dehydroquinase family. In terms of assembly, homododecamer.

The enzyme catalyses 3-dehydroquinate = 3-dehydroshikimate + H2O. Its pathway is metabolic intermediate biosynthesis; chorismate biosynthesis; chorismate from D-erythrose 4-phosphate and phosphoenolpyruvate: step 3/7. Catalyzes a trans-dehydration via an enolate intermediate. The chain is 3-dehydroquinate dehydratase from Shewanella sp. (strain MR-4).